Consider the following 128-residue polypeptide: MDPVMGIIAVALGGAVGSLARYAIALGTQKIAHAFPFGTFIANLAGCLFIGLLWSFFEKIHISHTFRLFLFTGLLGGLTTFSTFSRETYGFFETGEYWQGFGYLFLSISLGLAMVAVGFFISHKFLLR.

4 helical membrane-spanning segments follow: residues Val-4–Ile-24, Phe-37–Phe-57, Thr-65–Ser-85, and Phe-101–Ile-121. 2 residues coordinate Na(+): Gly-76 and Thr-79.

Belongs to the fluoride channel Fluc/FEX (TC 1.A.43) family.

The protein resides in the cell inner membrane. The enzyme catalyses fluoride(in) = fluoride(out). Its activity is regulated as follows. Na(+) is not transported, but it plays an essential structural role and its presence is essential for fluoride channel function. Functionally, fluoride-specific ion channel. Important for reducing fluoride concentration in the cell, thus reducing its toxicity. In Desulfotalea psychrophila (strain LSv54 / DSM 12343), this protein is Fluoride-specific ion channel FluC.